A 225-amino-acid chain; its full sequence is PKHD-type hydroxylase Smal_0990 (225 aa).

The Fe2OG dioxygenase domain maps to 78–177; it reads KYLPPRFNRY…RVASFFWVQS (100 aa). Fe cation is bound by residues His96, Asp98, and His158. Arg168 is a binding site for 2-oxoglutarate.

Fe(2+) serves as cofactor. L-ascorbate is required as a cofactor.

The sequence is that of PKHD-type hydroxylase Smal_0990 from Stenotrophomonas maltophilia (strain R551-3).